The sequence spans 112 residues: Small ribosomal subunit protein bS6 (112 aa).

The protein belongs to the bacterial ribosomal protein bS6 family.

Functionally, binds together with bS18 to 16S ribosomal RNA. This Chlamydia caviae (strain ATCC VR-813 / DSM 19441 / 03DC25 / GPIC) (Chlamydophila caviae) protein is Small ribosomal subunit protein bS6.